Reading from the N-terminus, the 350-residue chain is Xylene/toluene monooxygenase electron transfer component XylA (350 aa).

In terms of domain architecture, 2Fe-2S ferredoxin-type spans 16-108; that stretch reads PESTVSVRGQ…DLEIELDTVL (93 aa). Cysteine 52, cysteine 57, cysteine 60, and cysteine 92 together coordinate [2Fe-2S] cluster. The ferredoxin--NADH reductase stretch occupies residues 109–350; it reads GQALVPIETS…ADRFYNRPPC (242 aa). Residues 114-213 enclose the FAD-binding FR-type domain; the sequence is PIETSALISK…RAPYGQFGLH (100 aa).

The protein belongs to the bacterial ring-hydroxylating dioxygenase ferredoxin reductase family. In terms of assembly, monomer. The xylene/toluene monooxygenase is composed of two subunits: the electron transfer component XylA and the hydroxylase component XylM. FAD is required as a cofactor. Requires [2Fe-2S] cluster as cofactor.

It localises to the cell inner membrane. The enzyme catalyses 2 reduced [2Fe-2S]-[ferredoxin] + NAD(+) + H(+) = 2 oxidized [2Fe-2S]-[ferredoxin] + NADH. The reductase activity is completely inhibited by quercetin (a common inhibitor of mammalian oxidoreductases) and p-chloromercuribenzoate, but not by iodoacetimide, N-ethylmaleimide and pyrrazole. Its function is as follows. Component of a monooxygenase that catalyzes the first step in the degradation of xylenes and toluenes. XylA is responsible for the transport of electrons from the electron donor NADH to the terminal hydroxylase component, XylM. This Pseudomonas putida (Arthrobacter siderocapsulatus) protein is Xylene/toluene monooxygenase electron transfer component XylA.